Here is a 192-residue protein sequence, read N- to C-terminus: Ion-translocating oxidoreductase complex subunit A (192 aa).

6 helical membrane passes run 5 to 25 (ALIL…FLGL), 39 to 59 (TGMG…SYLV), 65 to 85 (APLG…AAVV), 102 to 122 (VLGI…VALL), 134 to 154 (ALYG…FASI), and 171 to 191 (AIAL…IGLV).

The protein belongs to the NqrDE/RnfAE family. The complex is composed of six subunits: RnfA, RnfB, RnfC, RnfD, RnfE and RnfG.

The protein resides in the cell inner membrane. Its function is as follows. Part of a membrane-bound complex that couples electron transfer with translocation of ions across the membrane. This is Ion-translocating oxidoreductase complex subunit A from Thioalkalivibrio sulfidiphilus (strain HL-EbGR7).